The chain runs to 290 residues: MNFIIATRRSKLAQVQTEIIIDLLNKKHDIECEKLLIETVGDKILEVSLDKIGGKGLFVKDIEVAMLEQRADAAVHSMKDVPYEMPKGFEIIAIPEREDVRDAFISLDNIKFKDLREGAKIGTSSRRRAAQLKLLRSDLDIVPIRGNVQTRIEKIKKENLDGIILAVAGLKRVNLDHLITDYFDTKEMVPAIGQGALGIEVMEEHPKKELFKDLDHYNSKICVLAERAFMRELDGDCHSTIGAYASIKDNIMHIIGIFERKNKIIKKEITGTKDQYEKLGIALAEHILKD.

At Cys-237 the chain carries S-(dipyrrolylmethanemethyl)cysteine.

It belongs to the HMBS family. Monomer. It depends on dipyrromethane as a cofactor.

It catalyses the reaction 4 porphobilinogen + H2O = hydroxymethylbilane + 4 NH4(+). It functions in the pathway porphyrin-containing compound metabolism; protoporphyrin-IX biosynthesis; coproporphyrinogen-III from 5-aminolevulinate: step 2/4. Functionally, tetrapolymerization of the monopyrrole PBG into the hydroxymethylbilane pre-uroporphyrinogen in several discrete steps. This Clostridium botulinum (strain 657 / Type Ba4) protein is Porphobilinogen deaminase.